Here is a 172-residue protein sequence, read N- to C-terminus: Large ribosomal subunit protein uL22y (172 aa).

The protein belongs to the universal ribosomal protein uL22 family.

The protein is Large ribosomal subunit protein uL22y of Hordeum vulgare (Barley).